Here is a 337-residue protein sequence, read N- to C-terminus: DNA-directed RNA polymerase subunit alpha (337 aa).

The interval 1–233 (MIQKNWQELI…DQLSLFVNFE (233 aa)) is alpha N-terminal domain (alpha-NTD). The segment at 249-337 (FNPALLKKVD…DLAKRYEDQY (89 aa)) is alpha C-terminal domain (alpha-CTD).

It belongs to the RNA polymerase alpha chain family. As to quaternary structure, homodimer. The RNAP catalytic core consists of 2 alpha, 1 beta, 1 beta' and 1 omega subunit. When a sigma factor is associated with the core the holoenzyme is formed, which can initiate transcription.

It carries out the reaction RNA(n) + a ribonucleoside 5'-triphosphate = RNA(n+1) + diphosphate. DNA-dependent RNA polymerase catalyzes the transcription of DNA into RNA using the four ribonucleoside triphosphates as substrates. In Bartonella quintana (strain Toulouse) (Rochalimaea quintana), this protein is DNA-directed RNA polymerase subunit alpha.